Here is a 480-residue protein sequence, read N- to C-terminus: Cysteine--tRNA ligase (480 aa).

Cys29 serves as a coordination point for Zn(2+). A 'HIGH' region motif is present at residues 31–41 (PTVYGHAHLGH). Zn(2+) contacts are provided by Cys221, His246, and Glu250. A 'KMSKS' region motif is present at residues 278–282 (KMGKS). Position 281 (Lys281) interacts with ATP.

Belongs to the class-I aminoacyl-tRNA synthetase family. In terms of assembly, monomer. Requires Zn(2+) as cofactor.

Its subcellular location is the cytoplasm. The catalysed reaction is tRNA(Cys) + L-cysteine + ATP = L-cysteinyl-tRNA(Cys) + AMP + diphosphate. This Chlorobium chlorochromatii (strain CaD3) protein is Cysteine--tRNA ligase.